The primary structure comprises 80 residues: Exodeoxyribonuclease 7 small subunit (80 aa).

The protein belongs to the XseB family. As to quaternary structure, heterooligomer composed of large and small subunits.

It localises to the cytoplasm. The enzyme catalyses Exonucleolytic cleavage in either 5'- to 3'- or 3'- to 5'-direction to yield nucleoside 5'-phosphates.. Bidirectionally degrades single-stranded DNA into large acid-insoluble oligonucleotides, which are then degraded further into small acid-soluble oligonucleotides. This Rickettsia africae (strain ESF-5) protein is Exodeoxyribonuclease 7 small subunit.